The following is a 170-amino-acid chain: Adenine phosphoribosyltransferase (170 aa).

Belongs to the purine/pyrimidine phosphoribosyltransferase family. In terms of assembly, homodimer.

Its subcellular location is the cytoplasm. The enzyme catalyses AMP + diphosphate = 5-phospho-alpha-D-ribose 1-diphosphate + adenine. Its pathway is purine metabolism; AMP biosynthesis via salvage pathway; AMP from adenine: step 1/1. Its function is as follows. Catalyzes a salvage reaction resulting in the formation of AMP, that is energically less costly than de novo synthesis. The chain is Adenine phosphoribosyltransferase from Fervidobacterium nodosum (strain ATCC 35602 / DSM 5306 / Rt17-B1).